The primary structure comprises 445 residues: Ubiquitin carboxyl-terminal hydrolase MINDY-3 (445 aa).

The active-site Nucleophile is the Cys-51. Ser-125 is modified (phosphoserine). The active-site Proton acceptor is His-287.

Belongs to the MINDY deubiquitinase family. FAM188 subfamily. As to quaternary structure, interacts with COPS5.

The protein localises to the nucleus. The enzyme catalyses Thiol-dependent hydrolysis of ester, thioester, amide, peptide and isopeptide bonds formed by the C-terminal Gly of ubiquitin (a 76-residue protein attached to proteins as an intracellular targeting signal).. Its function is as follows. Hydrolase that can remove 'Lys-48'-linked conjugated ubiquitin from proteins. The sequence is that of Ubiquitin carboxyl-terminal hydrolase MINDY-3 (MINDY3) from Bos taurus (Bovine).